Reading from the N-terminus, the 103-residue chain is Large ribosomal subunit protein bL21 (103 aa).

The protein belongs to the bacterial ribosomal protein bL21 family. In terms of assembly, part of the 50S ribosomal subunit. Contacts protein L20.

Its function is as follows. This protein binds to 23S rRNA in the presence of protein L20. This Aromatoleum aromaticum (strain DSM 19018 / LMG 30748 / EbN1) (Azoarcus sp. (strain EbN1)) protein is Large ribosomal subunit protein bL21.